A 510-amino-acid chain; its full sequence is ATP synthase subunit alpha (510 aa).

Residue 169–176 coordinates ATP; the sequence is GDRQTGKS.

This sequence belongs to the ATPase alpha/beta chains family. In terms of assembly, F-type ATPases have 2 components, CF(1) - the catalytic core - and CF(0) - the membrane proton channel. CF(1) has five subunits: alpha(3), beta(3), gamma(1), delta(1), epsilon(1). CF(0) has three main subunits: a(1), b(2) and c(9-12). The alpha and beta chains form an alternating ring which encloses part of the gamma chain. CF(1) is attached to CF(0) by a central stalk formed by the gamma and epsilon chains, while a peripheral stalk is formed by the delta and b chains.

The protein localises to the cell membrane. It carries out the reaction ATP + H2O + 4 H(+)(in) = ADP + phosphate + 5 H(+)(out). Produces ATP from ADP in the presence of a proton gradient across the membrane. The alpha chain is a regulatory subunit. The polypeptide is ATP synthase subunit alpha (Wigglesworthia glossinidia brevipalpis).